A 101-amino-acid chain; its full sequence is Large ribosomal subunit protein bL21 (101 aa).

The protein belongs to the bacterial ribosomal protein bL21 family. Part of the 50S ribosomal subunit. Contacts protein L20.

Its function is as follows. This protein binds to 23S rRNA in the presence of protein L20. The polypeptide is Large ribosomal subunit protein bL21 (Magnetococcus marinus (strain ATCC BAA-1437 / JCM 17883 / MC-1)).